Reading from the N-terminus, the 399-residue chain is Phosphoglycerate kinase (399 aa).

Residues 22–24 (DLN), Arg37, 60–63 (HFGR), Arg119, and Arg152 contribute to the substrate site. ATP is bound by residues Lys202, Glu324, and 354–357 (GGDT).

This sequence belongs to the phosphoglycerate kinase family. In terms of assembly, monomer.

The protein resides in the cytoplasm. The enzyme catalyses (2R)-3-phosphoglycerate + ATP = (2R)-3-phospho-glyceroyl phosphate + ADP. It participates in carbohydrate degradation; glycolysis; pyruvate from D-glyceraldehyde 3-phosphate: step 2/5. The sequence is that of Phosphoglycerate kinase from Rhizobium meliloti (strain 1021) (Ensifer meliloti).